The chain runs to 131 residues: Small ribosomal subunit protein uS8 (131 aa).

It belongs to the universal ribosomal protein uS8 family. As to quaternary structure, part of the 30S ribosomal subunit. Contacts proteins S5 and S12.

One of the primary rRNA binding proteins, it binds directly to 16S rRNA central domain where it helps coordinate assembly of the platform of the 30S subunit. This Zymomonas mobilis subsp. mobilis (strain ATCC 31821 / ZM4 / CP4) protein is Small ribosomal subunit protein uS8.